Here is a 1423-residue protein sequence, read N- to C-terminus: Protein phosphatase Slingshot homolog 2 (1423 aa).

Disordered regions lie at residues 1–37 (MALV…PRSI) and 51–70 (LPRG…NKHA). Residues 9–18 (SPTPSTTSSP) are compositionally biased toward low complexity. Residues S17, S25, and S36 each carry the phosphoserine modification. Positions 248–303 (ERTERLIKTKLREIMMQKDLENITSKEIRTELEMQMVCNLREFKEFIDNEMIVILG) constitute a DEK-C domain. In terms of domain architecture, Tyrosine-protein phosphatase spans 307 to 448 (SPTQIFEHVF…LEEYQGILLA (142 aa)). C392 acts as the Phosphocysteine intermediate in catalysis. S461, S487, S534, S631, and S633 each carry phosphoserine. 7 disordered regions span residues 698-725 (EMAA…DEDQ), 833-858 (HSST…MHSG), 878-950 (RQEQ…HCER), 967-991 (APQD…QRAV), 1021-1042 (SLGH…KQGL), 1074-1105 (PQVL…KGDC), and 1207-1226 (PEAC…DLSH). Polar residues predominate over residues 884 to 904 (HGTASAGPTLSNRKNSKNDSS). 3 stretches are compositionally biased toward basic and acidic residues: residues 910–932 (PKWK…EPSK), 976–987 (SRSKKQEGDLKK), and 1033–1042 (PSKEGEKQGL). The residue at position 1217 (S1217) is a Phosphoserine. T1422 is subject to Phosphothreonine.

This sequence belongs to the protein-tyrosine phosphatase family. As to quaternary structure, interacts with filamentous actin. Expressed in brain, heart, liver, skeletal muscle, testis and thymus. Also expressed at lower levels in kidney, small intestine and spleen. Within testicular seminiferous tubules expressed in germ cells and spermatocytes, where it has a cytoplasmic localization, and round spermatids, where it concentrates in the acrosomal region next to the nucleus.

The protein resides in the cytoplasm. It localises to the cytoskeleton. Its subcellular location is the cell junction. The protein localises to the focal adhesion. It is found in the cytoplasmic vesicle. The protein resides in the secretory vesicle. It localises to the acrosome. It catalyses the reaction O-phospho-L-tyrosyl-[protein] + H2O = L-tyrosyl-[protein] + phosphate. It carries out the reaction O-phospho-L-seryl-[protein] + H2O = L-seryl-[protein] + phosphate. The enzyme catalyses O-phospho-L-threonyl-[protein] + H2O = L-threonyl-[protein] + phosphate. Protein phosphatase which regulates actin filament dynamics. Dephosphorylates and activates the actin binding/depolymerizing factor cofilin, which subsequently binds to actin filaments and stimulates their disassembly. Inhibitory phosphorylation of cofilin is mediated by LIMK1, which may also be dephosphorylated and inactivated by this protein. Required for spermatogenesis. Involved in acrosome biogenesis, probably by regulating cofilin-mediated actin cytoskeleton remodeling during proacrosomal vesicle fusion and/or Golgi to perinuclear vesicle trafficking. The polypeptide is Protein phosphatase Slingshot homolog 2 (Ssh2) (Mus musculus (Mouse)).